The following is an 88-amino-acid chain: Protein K3 (88 aa).

One can recognise an S1 motif domain in the interval 8-82; that stretch reads LPNAGDVIKG…TKGYIDVNYK (75 aa). Binding to host EIF2AK2/PKR regions lie at residues 43-53 and 74-79; these read SVKMHMDRYVE and KGYIDV.

Belongs to the poxviridae K3 protein family. Interacts with host EIF2AK2/PKR kinase.

Its function is as follows. Viral mimic of EIF2S1/eIF-2alpha that acts as a pseudosubstrate for EIF2AK2/PKR kinase. Inhibits therefore EIF2S1/eIF-2alpha phosphorylation by host EIF2AK2/PKR kinase and prevents protein synthesis shutoff. Determinant of host species specificity. The sequence is that of Protein K3 from Vaccinia virus (strain Western Reserve) (VACV).